The sequence spans 451 residues: uncharacterized protein (451 aa).

2 disordered regions span residues 89–150 and 164–222; these read PRLS…ISRY and QVGE…KTFG. The segment covering 104 to 121 has biased composition (polar residues); sequence QKPTISRESFVWESSASI. Residues 137–147 are compositionally biased toward low complexity; that stretch reads SSTPSIEPESI. Residues 175 to 222 show a composition bias toward basic and acidic residues; sequence RAADSENERRPSEVREAPESRRRRETSETGSDKSKAPPPIKEIKKTFG. A helical membrane pass occupies residues 358–376; sequence LIGLMLFQTTIFIISKIIA. The interval 401–451 is disordered; that stretch reads RNGSSSGFASGTSSPLVFIPRTKRPSLVPSEKKMRGPSVTRDLAAEQERDA. The segment covering 403–414 has biased composition (low complexity); sequence GSSSGFASGTSS.

It belongs to the IIV-6 067R family.

It localises to the membrane. This is an uncharacterized protein from Invertebrate iridescent virus 3 (IIV-3).